Consider the following 612-residue polypeptide: Cytoplasmic dynein 1 intermediate chain 2 (612 aa).

Basic and acidic residues-rich tracts occupy residues 1 to 13 and 20 to 43; these read MSDK…ELER and QIRE…KKEA. The segment at 1–188 is disordered; the sequence is MSDKSDLKAE…PHELTEEEKQ (188 aa). S2 is modified (N-acetylserine). S51 is modified (diphosphoserine). S51 and S84 each carry phosphoserine. The segment covering 82-91 has biased composition (low complexity); the sequence is PSSKSVSTPS. At T89 the chain carries Phosphothreonine. A phosphoserine mark is found at S91, S95, and S98. The segment covering 164–188 has biased composition (basic and acidic residues); sequence EKTLKKDEENDSKAPPHELTEEEKQ. WD repeat units lie at residues 251-300, 304-344, 353-394, 403-443, 448-493, 496-536, and 542-581; these read SKHR…TTPE, HCQS…RTPV, AHTH…HPQD, SKAV…AGIS, GHQG…PLYS, DNSD…EVPT, and EGNP…AVPR.

The protein belongs to the dynein intermediate chain family. In terms of assembly, homodimer. The cytoplasmic dynein 1 complex consists of two catalytic heavy chains (HCs) and a number of non-catalytic subunits presented by intermediate chains (ICs), light intermediate chains (LICs) and light chains (LCs); the composition seems to vary in respect to the IC, LIC and LC composition. The heavy chain homodimer serves as a scaffold for the probable homodimeric assembly of the respective non-catalytic subunits. The ICs and LICs bind directly to the HC dimer and the LCs assemble on the IC dimer. Interacts with DYNLT3. Interacts with DYNLT1. Interacts (dephosphorylated at Ser-84) with DCTN1. Interacts with BICD2. Interacts with SPEF2. Interacts with CFAP61. The phosphorylation status of Ser-84 appears to be involved in dynactin-dependent target binding. In terms of processing, pyrophosphorylation by 5-diphosphoinositol pentakisphosphate (5-IP7) promotes interaction with DCTN1. Serine pyrophosphorylation is achieved by Mg(2+)-dependent, but enzyme independent transfer of a beta-phosphate from a inositol pyrophosphate to a pre-phosphorylated serine residue.

The protein resides in the cytoplasm. Its subcellular location is the cytoskeleton. In terms of biological role, acts as one of several non-catalytic accessory components of the cytoplasmic dynein 1 complex that are thought to be involved in linking dynein to cargos and to adapter proteins that regulate dynein function. Cytoplasmic dynein 1 acts as a motor for the intracellular retrograde motility of vesicles and organelles along microtubules. The intermediate chains mediate the binding of dynein to dynactin via its 150 kDa component (p150-glued) DCTN1. Involved in membrane-transport, such as Golgi apparatus, late endosomes and lysosomes. This Mus musculus (Mouse) protein is Cytoplasmic dynein 1 intermediate chain 2 (Dync1i2).